The sequence spans 347 residues: tRNA N6-adenosine threonylcarbamoyltransferase (347 aa).

H113 and H117 together coordinate Fe cation. Residues 136–140 (LVSGG), D170, G183, D187, and N282 each bind substrate. D310 is a binding site for Fe cation.

It belongs to the KAE1 / TsaD family. Fe(2+) is required as a cofactor.

It localises to the cytoplasm. The catalysed reaction is L-threonylcarbamoyladenylate + adenosine(37) in tRNA = N(6)-L-threonylcarbamoyladenosine(37) in tRNA + AMP + H(+). Its function is as follows. Required for the formation of a threonylcarbamoyl group on adenosine at position 37 (t(6)A37) in tRNAs that read codons beginning with adenine. Is involved in the transfer of the threonylcarbamoyl moiety of threonylcarbamoyl-AMP (TC-AMP) to the N6 group of A37, together with TsaE and TsaB. TsaD likely plays a direct catalytic role in this reaction. This is tRNA N6-adenosine threonylcarbamoyltransferase from Cutibacterium acnes (strain DSM 16379 / KPA171202) (Propionibacterium acnes).